A 466-amino-acid chain; its full sequence is Ribulose bisphosphate carboxylase large chain (466 aa).

Lysine 4 carries the N6,N6,N6-trimethyllysine modification. Positions 113 and 163 each coordinate substrate. Catalysis depends on lysine 165, which acts as the Proton acceptor. Lysine 167 is a binding site for substrate. Lysine 191, aspartate 193, and glutamate 194 together coordinate Mg(2+). Lysine 191 bears the N6-carboxylysine mark. Histidine 284 (proton acceptor) is an active-site residue. Substrate-binding residues include arginine 285, histidine 317, and serine 369.

Belongs to the RuBisCO large chain family. Type I subfamily. As to quaternary structure, heterohexadecamer of 8 large chains and 8 small chains; disulfide-linked. The disulfide link is formed within the large subunit homodimers. It depends on Mg(2+) as a cofactor. In terms of processing, the disulfide bond which can form in the large chain dimeric partners within the hexadecamer appears to be associated with oxidative stress and protein turnover.

Its subcellular location is the plastid. It localises to the chloroplast. The enzyme catalyses 2 (2R)-3-phosphoglycerate + 2 H(+) = D-ribulose 1,5-bisphosphate + CO2 + H2O. It carries out the reaction D-ribulose 1,5-bisphosphate + O2 = 2-phosphoglycolate + (2R)-3-phosphoglycerate + 2 H(+). RuBisCO catalyzes two reactions: the carboxylation of D-ribulose 1,5-bisphosphate, the primary event in carbon dioxide fixation, as well as the oxidative fragmentation of the pentose substrate in the photorespiration process. Both reactions occur simultaneously and in competition at the same active site. The polypeptide is Ribulose bisphosphate carboxylase large chain (Drimys winteri (Winter's bark)).